A 796-amino-acid chain; its full sequence is Disintegrin and metalloproteinase domain-containing protein B (796 aa).

Positions 1–23 (MKALSCLLAVIATAGSLFQHVDA) are cleaved as a signal peptide. At 24 to 706 (RSHARDRLNN…VSDWVSRHKP (683 aa)) the chain is on the extracellular side. Residues Asn-33, Asn-226, Asn-313, and Asn-407 are each glycosylated (N-linked (GlcNAc...) asparagine). The Peptidase M12B domain maps to 271–510 (RVALIGVVAD…HSILTNCLTT (240 aa)). Disulfide bonds link Cys-395-Cys-495, Cys-448-Cys-459, and Cys-580-Cys-600. His-431 contributes to the Zn(2+) binding site. The active site involves Glu-432. Zn(2+)-binding residues include His-435 and His-441. Residues 519 to 608 (GQQCGNGIVE…DCPRDTHSKN (90 aa)) form the Disintegrin domain. Residues 707-727 (IVIGVAVGVGCLLLLAILSCI) form a helical membrane-spanning segment. Topologically, residues 728 to 796 (CGRSKKRRPR…PGRMPSTRYA (69 aa)) are cytoplasmic. The segment at 737-796 (RNRKMAPINMRPMPPVYNGWTGPPPNAESPGGHPQYNHVPPPINAPPPAYPGRMPSTRYA) is disordered. The segment covering 775 to 786 (VPPPINAPPPAY) has biased composition (pro residues).

Zn(2+) serves as cofactor.

Its subcellular location is the membrane. In terms of biological role, probable zinc protease. This is Disintegrin and metalloproteinase domain-containing protein B (ADM-B) from Arthroderma otae (strain ATCC MYA-4605 / CBS 113480) (Microsporum canis).